A 338-amino-acid polypeptide reads, in one-letter code: NADPH dehydrogenase (338 aa).

22–25 serves as a coordination point for FMN; it reads SPMC. Tyr-27 is a binding site for substrate. Residues Ala-59 and Gln-101 each coordinate FMN. 163 to 166 is a binding site for substrate; the sequence is HAAH. FMN contacts are provided by residues Arg-214 and 306–307; that span reads GR.

It belongs to the NADH:flavin oxidoreductase/NADH oxidase family. NamA subfamily. In terms of assembly, homotetramer. It depends on FMN as a cofactor.

It catalyses the reaction A + NADPH + H(+) = AH2 + NADP(+). Its function is as follows. Catalyzes the reduction of the double bond of an array of alpha,beta-unsaturated aldehydes and ketones. It also reduces the nitro group of nitroester and nitroaromatic compounds. It could have a role in detoxification processes. In Listeria innocua serovar 6a (strain ATCC BAA-680 / CLIP 11262), this protein is NADPH dehydrogenase.